The primary structure comprises 507 residues: Cobyric acid synthase (507 aa).

The GATase cobBQ-type domain occupies 259–456 (EIQIAVIKLP…LHGIFDNGTW (198 aa)). The active-site Nucleophile is the cysteine 340. Histidine 448 is a catalytic residue.

This sequence belongs to the CobB/CobQ family. CobQ subfamily.

Its pathway is cofactor biosynthesis; adenosylcobalamin biosynthesis. Its function is as follows. Catalyzes amidations at positions B, D, E, and G on adenosylcobyrinic A,C-diamide. NH(2) groups are provided by glutamine, and one molecule of ATP is hydrogenolyzed for each amidation. In Prochlorococcus marinus (strain SARG / CCMP1375 / SS120), this protein is Cobyric acid synthase.